A 116-amino-acid polypeptide reads, in one-letter code: Large ribosomal subunit protein bL20c (116 aa).

It belongs to the bacterial ribosomal protein bL20 family.

It localises to the plastid. Its subcellular location is the chloroplast. In terms of biological role, binds directly to 23S ribosomal RNA and is necessary for the in vitro assembly process of the 50S ribosomal subunit. It is not involved in the protein synthesizing functions of that subunit. The protein is Large ribosomal subunit protein bL20c (rpl20) of Marchantia polymorpha (Common liverwort).